A 450-amino-acid polypeptide reads, in one-letter code: Phosphoglucosamine mutase (450 aa).

S101 acts as the Phosphoserine intermediate in catalysis. Mg(2+) contacts are provided by S101, D240, D242, and D244. S101 carries the post-translational modification Phosphoserine.

Belongs to the phosphohexose mutase family. It depends on Mg(2+) as a cofactor. In terms of processing, activated by phosphorylation.

It carries out the reaction alpha-D-glucosamine 1-phosphate = D-glucosamine 6-phosphate. In terms of biological role, catalyzes the conversion of glucosamine-6-phosphate to glucosamine-1-phosphate. The polypeptide is Phosphoglucosamine mutase (Streptococcus thermophilus (strain ATCC BAA-250 / LMG 18311)).